A 298-amino-acid chain; its full sequence is Olfactory receptor 5AK3 (298 aa).

At methionine 1–histidine 25 the chain is on the extracellular side. Asparagine 5 carries an N-linked (GlcNAc...) asparagine glycan. A helical transmembrane segment spans residues valine 26–isoleucine 46. Over leucine 47–arginine 54 the chain is Cytoplasmic. The chain crosses the membrane as a helical span at residues leucine 55 to serine 75. Residues alanine 76 to isoleucine 99 lie on the Extracellular side of the membrane. A disulfide bridge links cysteine 97 with cysteine 189. A helical transmembrane segment spans residues glutamine 100–methionine 120. At aspartate 121–proline 133 the chain is on the cytoplasmic side. Residues methionine 134–isoleucine 154 form a helical membrane-spanning segment. Asparagine 155 carries an N-linked (GlcNAc...) asparagine glycan. At asparagine 155–isoleucine 196 the chain is on the extracellular side. The helical transmembrane segment at isoleucine 197–serine 217 threads the bilayer. At tyrosine 218 to serine 237 the chain is on the cytoplasmic side. The helical transmembrane segment at phenylalanine 238–methionine 258 threads the bilayer. The Extracellular portion of the chain corresponds to tyrosine 259–methionine 271. N-linked (GlcNAc...) asparagine glycosylation occurs at asparagine 265. A helical transmembrane segment spans residues lysine 272–leucine 292. Topologically, residues arginine 293–lysine 298 are cytoplasmic.

Belongs to the G-protein coupled receptor 1 family.

It localises to the cell membrane. In terms of biological role, odorant receptor. This chain is Olfactory receptor 5AK3 (OR5AK3P), found in Homo sapiens (Human).